We begin with the raw amino-acid sequence, 921 residues long: Isoleucine--tRNA ligase (921 aa).

The short motif at 57–67 (PYANGDIHMGH) is the 'HIGH' region element. Glu553 is a binding site for L-isoleucyl-5'-AMP. Positions 594–598 (KMSKS) match the 'KMSKS' region motif. Lys597 is a binding site for ATP.

It belongs to the class-I aminoacyl-tRNA synthetase family. IleS type 1 subfamily. In terms of assembly, monomer.

The protein resides in the cytoplasm. It catalyses the reaction tRNA(Ile) + L-isoleucine + ATP = L-isoleucyl-tRNA(Ile) + AMP + diphosphate. Functionally, catalyzes the attachment of isoleucine to tRNA(Ile). As IleRS can inadvertently accommodate and process structurally similar amino acids such as valine, to avoid such errors it has two additional distinct tRNA(Ile)-dependent editing activities. One activity is designated as 'pretransfer' editing and involves the hydrolysis of activated Val-AMP. The other activity is designated 'posttransfer' editing and involves deacylation of mischarged Val-tRNA(Ile). This chain is Isoleucine--tRNA ligase, found in Bacillus subtilis (strain 168).